Reading from the N-terminus, the 428-residue chain is MLYLLLTTTLLMMTWNRYAGRIAFLSLLGYFVIMLNIWLHFGSLSESVTLLFGGGLVRLDESILSALLFILFLGLVIMNRTGDLGWEFHLLLMGGLTGAIYMLTAYDLLLMVVGFEFLNLSTYLILSLYRGTETATLKYLLSSAFYTTLLLLAISFFYGLTGSTGYDALFVQMNYLGGETFLPQILLLGTIAFKLGLVPAHLWVPDVYDGLPMTLLSWMGSVPKAAVLLWLPTIYPLLNQLAPFLLVLSALSFLLSAVLMAAQYKMKRFLAYSAIGHLGFVVAAFAIGDYHAYGYYIFIYMIATLAQFVLLSELPQTELMKQTSVLKDHRALGLGFLVIVLTMASLPPFAGFYAKLLVLFGFLEIGYGIFAVLLILASLRSAAYYLKWIQTTFFSVVPFASAPIQVQYPNLVSFLVTLILPSTLLLLL.

Transmembrane regions (helical) follow at residues Ile-22–Gly-42, Leu-59–Asn-79, Leu-84–Thr-104, Leu-108–Leu-128, Leu-140–Leu-160, Ile-185–Pro-205, Trp-218–Leu-238, Leu-241–Ala-261, Phe-269–Asp-289, Ala-292–Ser-312, Leu-332–Phe-352, Leu-356–Leu-376, Tyr-384–Ile-404, and Tyr-408–Leu-428.

The protein belongs to the complex I subunit 2 family.

It is found in the mitochondrion inner membrane. The catalysed reaction is a ubiquinone + NADH + 5 H(+)(in) = a ubiquinol + NAD(+) + 4 H(+)(out). Functionally, core subunit of the mitochondrial membrane respiratory chain NADH dehydrogenase (Complex I) that is believed to belong to the minimal assembly required for catalysis. Complex I functions in the transfer of electrons from NADH to the respiratory chain. The immediate electron acceptor for the enzyme is believed to be ubiquinone. This is NADH-ubiquinone oxidoreductase chain 2 from Hyaloraphidium curvatum (Lower fungus).